The following is a 492-amino-acid chain: MQESRSKESTLSGDEDKDVHRFLDEFDDKCTCKLLKEMKETLEGLKKSHPNPTNLDEFYRLFERYLRTRHEKIVWEKIRSPKDRIVQYNEIPEPTEKSKELLRKLAILKLNGGLGTTMGCVGPKSAITIKDGKNFIDLVVKQIRYLNSKYKIDVPLILMNSFNTEGMTDKIIFRYDGIKKFSQSKFPRISSETLLPVSPSHGDKGMYPPGHGDLFYSMKNSGMLEELLEGGYEYLFVSNIDNLASTVDLKLLEYFATNELGFLMEVTDKTRADVKGGTLIEYKGALRLLEIAQVPSNKKSEFTSFKKFTIFNTNNLWINLKEMKKKLEEGFFDLDIIENKKALDDETVIQLETAIGSAIKYFPNSCGVVVPRSRFLPVKTCSDLFLVESNLFVEKNGTLQLHPSRVPETCPTVKLIGENFSKIEKYEKCFKGIPDILELEVLTVSGNVLFGKNVVLKGTVIILADEKSKICVPDGSVLEDNIIYGNLPIIDH.

UTP is bound by residues 110–113, K124, Q183, and G210; that span reads LNGG. 112 to 113 contributes to the substrate binding site; sequence GG. Residue K124 coordinates Mg(2+). Substrate-binding positions include H211 and 239-241; that span reads NID. The UTP site is built by D241 and K379. D241 is a Mg(2+) binding site. Residue K379 is part of the active site. The interval 441–492 is oligomerization; that stretch reads VLTVSGNVLFGKNVVLKGTVIILADEKSKICVPDGSVLEDNIIYGNLPIIDH.

Belongs to the UDPGP type 1 family. As to quaternary structure, homooctamer.

It carries out the reaction alpha-D-glucose 1-phosphate + UTP + H(+) = UDP-alpha-D-glucose + diphosphate. In terms of biological role, plays a central role as a glucosyl donor in cellular metabolic pathways. The sequence is that of UTP--glucose-1-phosphate uridylyltransferase (UGP1) from Encephalitozoon cuniculi (strain GB-M1) (Microsporidian parasite).